The sequence spans 1038 residues: TonB-dependent receptor P39 (1038 aa).

Residues 1-39 (MFKQKLKMKPKIKRNCTFSGLAFILMLLFSSFTVNNLNA) form the signal peptide. Positions 120–127 (DEVVVIGY) match the TonB box motif. A TBDR plug domain is found at 131–243 (KRADVIGAVG…ANGVVLITTK (113 aa)). Positions 249–1038 (FPKMTVDYIS…EIVIGLNVEF (790 aa)) constitute a TBDR beta-barrel domain. Positions 1021–1038 (SLRYPNQTEIVIGLNVEF) match the TonB C-terminal box motif.

Belongs to the TonB-dependent receptor family.

The protein resides in the cell outer membrane. In terms of biological role, tonB-dependent receptor probably involved in ulvan degradation. Ulvan is the main polysaccharide component of the Ulvales (green seaweed) cell wall. It is composed of disaccharide building blocks comprising 3-sulfated rhamnose (Rha3S) linked to D-glucuronic acid (GlcA), L-iduronic acid (IduA), or D-xylose (Xyl). The TonB-dependent receptor may mediate transport of ulvan oligosaccharides from the surface of the outer membrane to the periplasm for subsequent degradation. The sequence is that of TonB-dependent receptor P39 from Formosa agariphila (strain DSM 15362 / KCTC 12365 / LMG 23005 / KMM 3901 / M-2Alg 35-1).